The primary structure comprises 429 residues: MTAITNIAAREILDSRGNPTVEVDVLLEDGSFGRAAVPSGASTGAHEAVELRDGDKSRYNGKGVLKAVDAVQSEILDAIGGMDAEDQVAVDEAMIALDGTPNKARLGANAILGVSLAVAKAAAETAGLPLYRYVGGVQGRVLPVPMMNIVNGGAHADNPIDFQEFMVMPVGATSLSDAVRMGAEIFHTLKSALKKAGHNTNVGDEGGFAPNLPSAEAALDFVMESINAAGFKPGSDVVLALDCAATEFFKDGAYRYEGEGQTRSIEQQVDYLAKLTEAYPILSIEDGMSEDDWDGWKLLTDRIGSRVQLVGDDLFVTNVERLARGIETGTANSILVKVNQIGSLTETLAAVDMAQRAGYTAVMSHRSGETEDSTIADLAVATNCGQIKTGSLARSDRLAKYNQLIRIEEGLGAQALYAGRSAIRQLAGR.

Glutamine 163 contacts (2R)-2-phosphoglycerate. Glutamate 205 acts as the Proton donor in catalysis. Mg(2+) is bound by residues aspartate 242, glutamate 285, and aspartate 312. (2R)-2-phosphoglycerate-binding residues include lysine 337, arginine 366, serine 367, and lysine 388. The active-site Proton acceptor is the lysine 337.

The protein belongs to the enolase family. Mg(2+) is required as a cofactor.

The protein resides in the cytoplasm. It localises to the secreted. Its subcellular location is the cell surface. It carries out the reaction (2R)-2-phosphoglycerate = phosphoenolpyruvate + H2O. The protein operates within carbohydrate degradation; glycolysis; pyruvate from D-glyceraldehyde 3-phosphate: step 4/5. Catalyzes the reversible conversion of 2-phosphoglycerate (2-PG) into phosphoenolpyruvate (PEP). It is essential for the degradation of carbohydrates via glycolysis. The chain is Enolase from Methylorubrum extorquens (strain CM4 / NCIMB 13688) (Methylobacterium extorquens).